The following is a 362-amino-acid chain: MTRAFLRSGYTTGACAAAAAKGAAEMLRDGQVIDRVEIILPGGELVPFTLRNQQLGDKFASCSVIKDAGDDPDITNGAEINVSLTIEPAPPGTKGEIAVSGGTGIGKVTKPGLAVPVGEWAINPVPRKMIRVVINEVFAIRCVPSLMKVTVSIPNGEELAKKTLNARLGIIGGLSILGTTGIVKPISAKAWTDTIDAAIDVALACGSKTLILSTGRTSELVAERHLQLGKLTQEEAFIMMGDHVGYALKTCAAKGVREIVIAGQFAKLLKVACGHEQTHVSSSELDLQQLVSWLGPDPRTSGLVLLARRANTARQVLEESGNDPVLMAAVCERVKGFAARLVQESSIKVLLAGYGQEVLYFG.

The protein belongs to the CbiD family.

It carries out the reaction Co-precorrin-5B + S-adenosyl-L-methionine = Co-precorrin-6A + S-adenosyl-L-homocysteine. Its pathway is cofactor biosynthesis; adenosylcobalamin biosynthesis; cob(II)yrinate a,c-diamide from sirohydrochlorin (anaerobic route): step 6/10. Its function is as follows. Catalyzes the methylation of C-1 in cobalt-precorrin-5B to form cobalt-precorrin-6A. The polypeptide is Cobalt-precorrin-5B C(1)-methyltransferase (Geotalea daltonii (strain DSM 22248 / JCM 15807 / FRC-32) (Geobacter daltonii)).